The primary structure comprises 340 residues: Glyceraldehyde-3-phosphate dehydrogenase, cytosolic (340 aa).

NAD(+) contacts are provided by residues 16 to 17 (RI), aspartate 38, and arginine 85. D-glyceraldehyde 3-phosphate is bound by residues 156–158 (SCT), threonine 187, 216–217 (TG), and arginine 239. The active-site Nucleophile is cysteine 157. Asparagine 321 is an NAD(+) binding site.

This sequence belongs to the glyceraldehyde-3-phosphate dehydrogenase family. In terms of assembly, homotetramer.

It localises to the cytoplasm. It carries out the reaction D-glyceraldehyde 3-phosphate + phosphate + NAD(+) = (2R)-3-phospho-glyceroyl phosphate + NADH + H(+). The protein operates within carbohydrate degradation; glycolysis; pyruvate from D-glyceraldehyde 3-phosphate: step 1/5. Its function is as follows. Key enzyme in glycolysis that catalyzes the first step of the pathway by converting D-glyceraldehyde 3-phosphate (G3P) into 3-phospho-D-glyceroyl phosphate. Essential for the maintenance of cellular ATP levels and carbohydrate metabolism. This Ginkgo biloba (Ginkgo) protein is Glyceraldehyde-3-phosphate dehydrogenase, cytosolic.